The following is a 331-amino-acid chain: Nacrein-like protein P1 (331 aa).

Positions 1-331 (QSPINIVSYD…LHALRNVEGY (331 aa)) constitute an Alpha-carbonic anhydrase domain. Zn(2+)-binding residues include H69, H71, and H94. The disordered stretch occupies residues 138–240 (DEPDDEECKR…GENGHKHGCR (103 aa)). Positions 144 to 156 (ECKRILKGHHPDN) are enriched in basic and acidic residues. A compositionally biased stretch (low complexity) spans 157–232 (NENGNGDNGN…NNGENGNNGE (76 aa)). Tandem repeats lie at residues 162-164 (GDN), 165-167 (GNN), 168-170 (GYN), 171-173 (GDN), 174-176 (GNN), 177-179 (GDN), 180-182 (GNN), 183-185 (GYN), 186-188 (GDN), 189-191 (GNN), 192-194 (GDN), 195-197 (GNN), 198-200 (GYN), 201-203 (GDN), 204-206 (GNN), 207-209 (GDN), 210-212 (GNN), 213-215 (GEN), 216-218 (GNN), 219-221 (GEN), 222-224 (GNN), 225-227 (GEN), 228-229 (GN), and 231-233 (GEN). A 24 X 3 AA approximate tandem repeats of G-X-N region spans residues 162–233 (GDNGNNGYNG…NGENGNNGEN (72 aa)). 298 to 299 (TT) contributes to the substrate binding site.

This sequence belongs to the alpha-carbonic anhydrase family. As to quaternary structure, homooligomer; disulfide-linked. May also be disulfide-linked to insoluble organic matrix. Requires Zn(2+) as cofactor. Expressed in the mantle.

The protein localises to the secreted. The protein resides in the extracellular space. Its subcellular location is the extracellular matrix. It catalyses the reaction hydrogencarbonate + H(+) = CO2 + H2O. Acts as a negative regulator for calcification in the shells of mollusks. May function both as a calcium concentrator and as a carbonic anhydrase required for production of carbonate ions, which are assembled to CaCO(3) at mineralization sites. Is important for shell formation in both the calcitic prismatic layer and the aragonitic nacreous layer. Shows inhibitory activity of crystal formation when present in free state but, when attached to the insoluble matrix, may regulate the form and size of aragonite crystal. In Mizuhopecten yessoensis (Japanese scallop), this protein is Nacrein-like protein P1.